The following is a 559-amino-acid chain: Potassium-transporting ATPase potassium-binding subunit (559 aa).

13 helical membrane passes run 5–25 (GFLL…PLGS), 27–47 (LARL…RILW), 63–83 (LLAL…LLFW), 132–152 (GLTV…FALI), 170–190 (LVRI…LFFI), 253–273 (LAQM…FGEA), 283–303 (LLWA…WAEV), 327–347 (FGVL…CGAV), 356–376 (ALGG…FGGV), 379–399 (GLYG…LMIG), 416–436 (MTAL…ALAM), 484–504 (LLAF…MAIA), and 524–544 (GALF…LTFI).

This sequence belongs to the KdpA family. In terms of assembly, the system is composed of three essential subunits: KdpA, KdpB and KdpC.

It localises to the cell inner membrane. Its function is as follows. Part of the high-affinity ATP-driven potassium transport (or Kdp) system, which catalyzes the hydrolysis of ATP coupled with the electrogenic transport of potassium into the cytoplasm. This subunit binds the periplasmic potassium ions and delivers the ions to the membrane domain of KdpB through an intramembrane tunnel. This is Potassium-transporting ATPase potassium-binding subunit from Salmonella typhi.